Consider the following 83-residue polypeptide: Keratin-associated protein 6-1 (83 aa).

Residues 9-15 (YGGLGCG) form an RPT 1-1 repeat. One copy of the RPT 1-2 repeat lies at 19 to 25 (YGGLGCG). An RPT 2-1 repeat occupies 44 to 55 (GYGYGSRSLCGS). One copy of the RPT 2-2 repeat lies at 56–67 (GYGYGSRSLCGS).

This sequence belongs to the KRTAP type 6 family. Interacts with wool keratins.

Functionally, in the wool cortex, wool keratin intermediate filaments are embedded in an interfilamentous matrix, consisting of hair keratin-associated proteins (KRTAP), which are essential for the formation of a rigid and resistant wool shaft through their extensive disulfide bond cross-linking with abundant cysteine residues of wool keratins. The matrix proteins include the high-sulfur and high-glycine-tyrosine keratins. This chain is Keratin-associated protein 6-1 (KRTAP6-1), found in Ovis aries (Sheep).